The sequence spans 362 residues: 3-dehydroquinate synthase (362 aa).

NAD(+)-binding positions include 71 to 76, 105 to 109, 129 to 130, Lys142, Lys151, and 169 to 172; these read DGEQYK, GVIGD, TT, and CLQT. Residues Glu184, His247, and His264 each contribute to the Zn(2+) site.

It belongs to the sugar phosphate cyclases superfamily. Dehydroquinate synthase family. Co(2+) is required as a cofactor. The cofactor is Zn(2+). It depends on NAD(+) as a cofactor.

It localises to the cytoplasm. The enzyme catalyses 7-phospho-2-dehydro-3-deoxy-D-arabino-heptonate = 3-dehydroquinate + phosphate. Its pathway is metabolic intermediate biosynthesis; chorismate biosynthesis; chorismate from D-erythrose 4-phosphate and phosphoenolpyruvate: step 2/7. Catalyzes the conversion of 3-deoxy-D-arabino-heptulosonate 7-phosphate (DAHP) to dehydroquinate (DHQ). This chain is 3-dehydroquinate synthase, found in Cronobacter sakazakii (strain ATCC BAA-894) (Enterobacter sakazakii).